The following is a 353-amino-acid chain: Histidinol-phosphate aminotransferase (353 aa).

The residue at position 218 (Lys218) is an N6-(pyridoxal phosphate)lysine.

It belongs to the class-II pyridoxal-phosphate-dependent aminotransferase family. Histidinol-phosphate aminotransferase subfamily. As to quaternary structure, homodimer. Pyridoxal 5'-phosphate is required as a cofactor.

The enzyme catalyses L-histidinol phosphate + 2-oxoglutarate = 3-(imidazol-4-yl)-2-oxopropyl phosphate + L-glutamate. The protein operates within amino-acid biosynthesis; L-histidine biosynthesis; L-histidine from 5-phospho-alpha-D-ribose 1-diphosphate: step 7/9. The chain is Histidinol-phosphate aminotransferase from Synechococcus sp. (strain JA-3-3Ab) (Cyanobacteria bacterium Yellowstone A-Prime).